A 1054-amino-acid polypeptide reads, in one-letter code: Cell wall acid trehalase ARB_03719 (1054 aa).

The N-terminal stretch at 1–24 (MKQPNINLAACILWLLSIITAVAA) is a signal peptide. Asn-138, Asn-178, Asn-183, Asn-207, Asn-239, Asn-277, and Asn-309 each carry an N-linked (GlcNAc...) asparagine glycan. A substrate-binding site is contributed by 450 to 451 (WD). Asn-495, Asn-515, Asn-572, and Asn-580 each carry an N-linked (GlcNAc...) asparagine glycan. Glu-586 functions as the Proton donor in the catalytic mechanism. Asn-620 and Asn-648 each carry an N-linked (GlcNAc...) asparagine glycan. Residue 654 to 655 (KQ) coordinates substrate. Residues Asn-808 and Asn-844 are each glycosylated (N-linked (GlcNAc...) asparagine). Residues 950–974 (PLHPVTDPENGDASGSSPTTPASSV) form a disordered region. The segment covering 962 to 974 (ASGSSPTTPASSV) has biased composition (low complexity). 3 N-linked (GlcNAc...) asparagine glycosylation sites follow: Asn-1004, Asn-1007, and Asn-1039.

Belongs to the glycosyl hydrolase 65 family.

Its subcellular location is the secreted. The protein resides in the cell wall. It carries out the reaction alpha,alpha-trehalose + H2O = alpha-D-glucose + beta-D-glucose. In terms of biological role, cell wall acid trehalase that catalyzes hydrolysis of the disaccharide trehalose and required for growth on trehalose as carbon source. Plays a role in virulence. The chain is Cell wall acid trehalase ARB_03719 from Arthroderma benhamiae (strain ATCC MYA-4681 / CBS 112371) (Trichophyton mentagrophytes).